The following is a 483-amino-acid chain: Probable serine incorporator (483 aa).

A run of 11 helical transmembrane segments spans residues 43–63, 109–129, 146–166, 169–189, 218–238, 249–269, 274–294, 295–315, 338–358, 414–434, and 457–477; these read STRITYAILFFLSSIAAWIML, IMFSVCLFHLFLSLCTIGVSS, LILLVGAMVGSFFISNSFFIG, WSWIGLVGAVLFMIVQFILLV, ISATVMLMAFVITLTVLMFHF, FFIGFNLALALLVTLTSMLPS, LPSSGILQSSVVAAYATYLVW, SAVSGVPSTCHPLIAVAPLFL, AGTNTAAIVIGALLTFISVAY, YSWSFFHLTFAVAALYLMMVL, and VVSSWVIFLLYGWTMMAPVCL.

Belongs to the TDE1 family.

The protein localises to the endoplasmic reticulum membrane. Its function is as follows. Enhances the incorporation of serine into phosphatidylserine and sphingolipids. This chain is Probable serine incorporator (serinc), found in Monosiga brevicollis (Choanoflagellate).